The sequence spans 243 residues: 1-(5-phosphoribosyl)-5-[(5-phosphoribosylamino)methylideneamino] imidazole-4-carboxamide isomerase (243 aa).

The active-site Proton acceptor is the Asp-8. Residue Asp-130 is the Proton donor of the active site.

Belongs to the HisA/HisF family.

The protein resides in the cytoplasm. The enzyme catalyses 1-(5-phospho-beta-D-ribosyl)-5-[(5-phospho-beta-D-ribosylamino)methylideneamino]imidazole-4-carboxamide = 5-[(5-phospho-1-deoxy-D-ribulos-1-ylimino)methylamino]-1-(5-phospho-beta-D-ribosyl)imidazole-4-carboxamide. The protein operates within amino-acid biosynthesis; L-histidine biosynthesis; L-histidine from 5-phospho-alpha-D-ribose 1-diphosphate: step 4/9. This is 1-(5-phosphoribosyl)-5-[(5-phosphoribosylamino)methylideneamino] imidazole-4-carboxamide isomerase from Methylococcus capsulatus (strain ATCC 33009 / NCIMB 11132 / Bath).